Here is a 121-residue protein sequence, read N- to C-terminus: Secretin (121 aa).

An N-terminal signal peptide occupies residues 1-18 (MAPRPLLLLLLLLGGSAA). Positions 19-26 (RPAPPRAR) are excised as a propeptide. Val54 is subject to Valine amide. Phosphoserine is present on Ser58. Residues 58-121 (SEQDAENSMA…AAAEGTLRPR (64 aa)) constitute a propeptide that is removed on maturation.

It belongs to the glucagon family.

It localises to the secreted. Hormone involved in different processes, such as regulation of the pH of the duodenal content, food intake and water homeostasis. Exerts its biological effects by binding to secretin receptor (SCTR), a G-protein coupled receptor expressed in the basolateral domain of several cells. Acts as a key gastrointestinal hormone by regulating the pH of the duodenal content. Secreted by S cells of the duodenum in the crypts of Lieberkuehn and regulates the pH of the duodenum by (1) inhibiting the secretion of gastric acid from the parietal cells of the stomach and (2) stimulating the production of bicarbonate (NaHCO(3)) from the ductal cells of the pancreas. Production of bicarbonate is essential to neutralize the pH and ensure no damage is done to the small intestine by the gastric acid. In addition to regulating the pH of the duodenal content, plays a central role in diet induced thermogenesis: acts as a non-sympathetic brown fat (BAT) activator mediating prandial thermogenesis, which consequentially induces satiation. Mechanistically, secretin released by the gut after a meal binds to secretin receptor (SCTR) in brown adipocytes, activating brown fat thermogenesis by stimulating lipolysis, which is sensed in the brain and promotes satiation. Also able to stimulate lipolysis in white adipocytes. Also plays an important role in cellular osmoregulation: released into the systemic circulation in response to hyperosmolality and acts at different levels in the hypothalamus, pituitary and kidney to regulate water homeostasis. Also plays a role in the central nervous system, possibly by acting as a neuropeptide hormone: required for hippocampal synaptic function and neural progenitor cells maintenance. This is Secretin from Homo sapiens (Human).